We begin with the raw amino-acid sequence, 248 residues long: GPN-loop GTPase PAB0955 (248 aa).

Residue 10–15 coordinates GTP; sequence GSGKTT. The Gly-Pro-Asn (GPN)-loop; involved in dimer interface signature appears at 65 to 67; sequence GPN. GTP contacts are provided by residues 165 to 168 and Ala224; that span reads NKVD.

Belongs to the GPN-loop GTPase family. In terms of assembly, homodimer. Interacts with DNA topoisomerase VI subunit B (top6B), DNA primase DnaG and RF-C.

Small GTPase that may be involved in genome maintenance. Has weak intrinsic GTPase activity but displays no ATPase activity. This chain is GPN-loop GTPase PAB0955, found in Pyrococcus abyssi (strain GE5 / Orsay).